The primary structure comprises 276 residues: Large ribosomal subunit protein uL2 (276 aa).

Disordered stretches follow at residues 38–59 (FQKS…GGHK) and 225–276 (VMNP…RHKR). Residues 39–49 (QKSGRNNNGHI) show a composition bias toward polar residues. Basic residues predominate over residues 50-59 (TTRHKGGGHK).

It belongs to the universal ribosomal protein uL2 family. In terms of assembly, part of the 50S ribosomal subunit. Forms a bridge to the 30S subunit in the 70S ribosome.

In terms of biological role, one of the primary rRNA binding proteins. Required for association of the 30S and 50S subunits to form the 70S ribosome, for tRNA binding and peptide bond formation. It has been suggested to have peptidyltransferase activity; this is somewhat controversial. Makes several contacts with the 16S rRNA in the 70S ribosome. The sequence is that of Large ribosomal subunit protein uL2 from Cupriavidus necator (strain ATCC 17699 / DSM 428 / KCTC 22496 / NCIMB 10442 / H16 / Stanier 337) (Ralstonia eutropha).